The sequence spans 412 residues: 1-deoxy-D-xylulose 5-phosphate reductoisomerase (412 aa).

T5, G6, S7, I8, G31, N33, and N125 together coordinate NADPH. Residue K126 coordinates 1-deoxy-D-xylulose 5-phosphate. Residue E127 participates in NADPH binding. D151 serves as a coordination point for Mn(2+). The 1-deoxy-D-xylulose 5-phosphate site is built by S152, E153, S189, and H212. E153 contributes to the Mn(2+) binding site. G218 contributes to the NADPH binding site. S225, N230, K231, and E234 together coordinate 1-deoxy-D-xylulose 5-phosphate. Residue E234 participates in Mn(2+) binding.

This sequence belongs to the DXR family. Requires Mg(2+) as cofactor. Mn(2+) is required as a cofactor.

It carries out the reaction 2-C-methyl-D-erythritol 4-phosphate + NADP(+) = 1-deoxy-D-xylulose 5-phosphate + NADPH + H(+). The protein operates within isoprenoid biosynthesis; isopentenyl diphosphate biosynthesis via DXP pathway; isopentenyl diphosphate from 1-deoxy-D-xylulose 5-phosphate: step 1/6. Catalyzes the NADPH-dependent rearrangement and reduction of 1-deoxy-D-xylulose-5-phosphate (DXP) to 2-C-methyl-D-erythritol 4-phosphate (MEP). This is 1-deoxy-D-xylulose 5-phosphate reductoisomerase from Prochlorococcus marinus (strain MIT 9313).